Here is a 264-residue protein sequence, read N- to C-terminus: S-adenosylmethionine decarboxylase proenzyme (264 aa).

S112 acts as the Schiff-base intermediate with substrate; via pyruvic acid in catalysis. Residue S112 is modified to Pyruvic acid (Ser); by autocatalysis. H117 acts as the Proton acceptor; for processing activity in catalysis. C140 serves as the catalytic Proton donor; for catalytic activity.

The protein belongs to the prokaryotic AdoMetDC family. Type 2 subfamily. Heterooctamer of four alpha and four beta chains arranged as a tetramer of alpha/beta heterodimers. It depends on pyruvate as a cofactor. Is synthesized initially as an inactive proenzyme. Formation of the active enzyme involves a self-maturation process in which the active site pyruvoyl group is generated from an internal serine residue via an autocatalytic post-translational modification. Two non-identical subunits are generated from the proenzyme in this reaction, and the pyruvate is formed at the N-terminus of the alpha chain, which is derived from the carboxyl end of the proenzyme. The post-translation cleavage follows an unusual pathway, termed non-hydrolytic serinolysis, in which the side chain hydroxyl group of the serine supplies its oxygen atom to form the C-terminus of the beta chain, while the remainder of the serine residue undergoes an oxidative deamination to produce ammonia and the pyruvoyl group blocking the N-terminus of the alpha chain.

It catalyses the reaction S-adenosyl-L-methionine + H(+) = S-adenosyl 3-(methylsulfanyl)propylamine + CO2. The protein operates within amine and polyamine biosynthesis; S-adenosylmethioninamine biosynthesis; S-adenosylmethioninamine from S-adenosyl-L-methionine: step 1/1. Its function is as follows. Catalyzes the decarboxylation of S-adenosylmethionine to S-adenosylmethioninamine (dcAdoMet), the propylamine donor required for the synthesis of the polyamines spermine and spermidine from the diamine putrescine. The protein is S-adenosylmethionine decarboxylase proenzyme of Salmonella dublin (strain CT_02021853).